The sequence spans 121 residues: Small ribosomal subunit protein uS13 (121 aa).

The segment at 96-121 is disordered; the sequence is PVRGQNTKNNARTRKGKAVAIAGKKK. A compositionally biased stretch (basic residues) spans 106–121; the sequence is ARTRKGKAVAIAGKKK.

It belongs to the universal ribosomal protein uS13 family. In terms of assembly, part of the 30S ribosomal subunit. Forms a loose heterodimer with protein S19. Forms two bridges to the 50S subunit in the 70S ribosome.

Functionally, located at the top of the head of the 30S subunit, it contacts several helices of the 16S rRNA. In the 70S ribosome it contacts the 23S rRNA (bridge B1a) and protein L5 of the 50S subunit (bridge B1b), connecting the 2 subunits; these bridges are implicated in subunit movement. Contacts the tRNAs in the A and P-sites. This Streptococcus agalactiae serotype Ia (strain ATCC 27591 / A909 / CDC SS700) protein is Small ribosomal subunit protein uS13.